The primary structure comprises 250 residues: Adenosylcobinamide-GDP ribazoletransferase (250 aa).

A run of 6 helical transmembrane segments spans residues 33–53 (IASY…LLYI), 63–83 (IVMT…HIDG), 109–129 (LGTN…LFLT), 137–157 (LTAL…SMMI), 180–200 (FAIA…LAVF), and 203–223 (ILTI…LRIG).

The protein belongs to the CobS family. Mg(2+) serves as cofactor.

It is found in the cell membrane. The enzyme catalyses alpha-ribazole + adenosylcob(III)inamide-GDP = adenosylcob(III)alamin + GMP + H(+). It carries out the reaction alpha-ribazole 5'-phosphate + adenosylcob(III)inamide-GDP = adenosylcob(III)alamin 5'-phosphate + GMP + H(+). The protein operates within cofactor biosynthesis; adenosylcobalamin biosynthesis; adenosylcobalamin from cob(II)yrinate a,c-diamide: step 7/7. Its function is as follows. Joins adenosylcobinamide-GDP and alpha-ribazole to generate adenosylcobalamin (Ado-cobalamin). Also synthesizes adenosylcobalamin 5'-phosphate from adenosylcobinamide-GDP and alpha-ribazole 5'-phosphate. In Thermoanaerobacter pseudethanolicus (strain ATCC 33223 / 39E) (Clostridium thermohydrosulfuricum), this protein is Adenosylcobinamide-GDP ribazoletransferase.